A 494-amino-acid polypeptide reads, in one-letter code: Alpha-amylase B (494 aa).

The first 18 residues, 1-18 (MFLAKSIVCLALLAVANA), serve as a signal peptide directing secretion. Glutamine 19 is subject to Pyrrolidone carboxylic acid. Residues cysteine 46 and cysteine 102 are joined by a disulfide bond. The Ca(2+) site is built by asparagine 116, arginine 165, and aspartate 174. A disulfide bond links cysteine 153 and cysteine 167. Arginine 202 lines the chloride pocket. The Nucleophile role is filled by aspartate 204. Ca(2+) is bound at residue histidine 208. Glutamate 241 (proton donor) is an active-site residue. Residues asparagine 304 and arginine 343 each coordinate chloride. Disulfide bonds link cysteine 376–cysteine 382 and cysteine 448–cysteine 460.

Belongs to the glycosyl hydrolase 13 family. As to quaternary structure, monomer. Ca(2+) serves as cofactor. Requires chloride as cofactor.

It catalyses the reaction Endohydrolysis of (1-&gt;4)-alpha-D-glucosidic linkages in polysaccharides containing three or more (1-&gt;4)-alpha-linked D-glucose units.. This chain is Alpha-amylase B (Amy-d), found in Drosophila melanogaster (Fruit fly).